Reading from the N-terminus, the 734-residue chain is Origin of replication complex subunit 3 (734 aa).

2 disordered regions span residues 1 to 25 (MAPS…SDTA) and 532 to 554 (GQRQ…KLEK). Over residues 12 to 24 (QCSTTDSFNSSDT) the composition is skewed to polar residues.

This sequence belongs to the ORC3 family. As to quaternary structure, component of the origin recognition complex (ORC) composed of at least ORC1 (ORC1A or ORC1B), ORC2, ORC3, ORC4, ORC5 and ORC6. ORC is regulated in a cell-cycle and development dependent manner. It is sequentially assembled at the exit from anaphase of mitosis and disassembled as cells enter S phase. Interacts directly with ORC1A, ORC2, ORC4, ORC5 and ORC6. As to expression, follow a cell-cycle regulation with a peak at the G1/S-phase. Mostly expressed in siliques and flowers, and, to a lower exent, in flower buds, leaves, roots and stems.

The protein localises to the nucleus. Functionally, component of the origin recognition complex (ORC) that binds origins of replication. DNA-binding is ATP-dependent. The specific DNA sequences that define origins of replication have not been identified yet. This chain is Origin of replication complex subunit 3, found in Arabidopsis thaliana (Mouse-ear cress).